The sequence spans 164 residues: Large ribosomal subunit protein uL10 (164 aa).

Belongs to the universal ribosomal protein uL10 family. In terms of assembly, part of the ribosomal stalk of the 50S ribosomal subunit. The N-terminus interacts with L11 and the large rRNA to form the base of the stalk. The C-terminus forms an elongated spine to which L12 dimers bind in a sequential fashion forming a multimeric L10(L12)X complex.

In terms of biological role, forms part of the ribosomal stalk, playing a central role in the interaction of the ribosome with GTP-bound translation factors. The chain is Large ribosomal subunit protein uL10 from Chromobacterium violaceum (strain ATCC 12472 / DSM 30191 / JCM 1249 / CCUG 213 / NBRC 12614 / NCIMB 9131 / NCTC 9757 / MK).